Reading from the N-terminus, the 112-residue chain is UPF0342 protein SPT_0901 (112 aa).

It belongs to the UPF0342 family.

The protein is UPF0342 protein SPT_0901 of Streptococcus pneumoniae (strain Taiwan19F-14).